The primary structure comprises 548 residues: Membrane protein insertase YidC (548 aa).

Residues 6–26 (NLLVIALLFVSFMIWQAWEQD) traverse the membrane as a helical segment. The disordered stretch occupies residues 28 to 55 (NPQPQAQQTTQTTTTAAGSAADQGVPAS). Positions 30–50 (QPQAQQTTQTTTTAAGSAADQ) are enriched in low complexity. 4 consecutive transmembrane segments (helical) span residues 350–370 (FVGN…GIMY), 420–440 (LGGC…YYML), 458–478 (LSAQ…MFFI), and 499–519 (PVIF…YYIV).

Belongs to the OXA1/ALB3/YidC family. Type 1 subfamily. In terms of assembly, interacts with the Sec translocase complex via SecD. Specifically interacts with transmembrane segments of nascent integral membrane proteins during membrane integration.

It localises to the cell inner membrane. Its function is as follows. Required for the insertion and/or proper folding and/or complex formation of integral membrane proteins into the membrane. Involved in integration of membrane proteins that insert both dependently and independently of the Sec translocase complex, as well as at least some lipoproteins. Aids folding of multispanning membrane proteins. The chain is Membrane protein insertase YidC from Shigella flexneri.